The chain runs to 268 residues: AB hydrolase superfamily protein YisY (268 aa).

The AB hydrolase-1 domain maps to 23–254 (PIIFLHGWPL…NSGHGAFYEE (232 aa)). Active-site residues include Ser-96, Asp-220, and His-248.

Belongs to the AB hydrolase superfamily.

This chain is AB hydrolase superfamily protein YisY (yisY), found in Bacillus subtilis (strain 168).